A 623-amino-acid chain; its full sequence is DNA-directed RNA polymerase subunit beta' (623 aa).

Cys-70, Cys-72, Cys-85, and Cys-88 together coordinate Zn(2+). Mg(2+) contacts are provided by Asp-466, Asp-468, and Asp-470.

It belongs to the RNA polymerase beta' chain family. RpoC1 subfamily. In terms of assembly, in plastids the minimal PEP RNA polymerase catalytic core is composed of four subunits: alpha, beta, beta', and beta''. When a (nuclear-encoded) sigma factor is associated with the core the holoenzyme is formed, which can initiate transcription. Mg(2+) serves as cofactor. The cofactor is Zn(2+).

Its subcellular location is the plastid. It localises to the chloroplast. It catalyses the reaction RNA(n) + a ribonucleoside 5'-triphosphate = RNA(n+1) + diphosphate. Functionally, DNA-dependent RNA polymerase catalyzes the transcription of DNA into RNA using the four ribonucleoside triphosphates as substrates. The sequence is that of DNA-directed RNA polymerase subunit beta' from Guillardia theta (Cryptophyte).